Here is a 299-residue protein sequence, read N- to C-terminus: Putative pyrroline-5-carboxylate reductase 4 (299 aa).

This sequence belongs to the pyrroline-5-carboxylate reductase family.

It catalyses the reaction L-proline + NADP(+) = (S)-1-pyrroline-5-carboxylate + NADPH + 2 H(+). The enzyme catalyses L-proline + NAD(+) = (S)-1-pyrroline-5-carboxylate + NADH + 2 H(+). It participates in amino-acid biosynthesis; L-proline biosynthesis; L-proline from L-glutamate 5-semialdehyde: step 1/1. This Caenorhabditis elegans protein is Putative pyrroline-5-carboxylate reductase 4.